The following is a 139-amino-acid chain: NADPH-dependent 7-cyano-7-deazaguanine reductase (139 aa).

C34 serves as the catalytic Thioimide intermediate. Residue D41 is the Proton donor of the active site. Substrate contacts are provided by residues I56–L58 and H75–E76.

Belongs to the GTP cyclohydrolase I family. QueF type 1 subfamily.

It localises to the cytoplasm. The catalysed reaction is 7-aminomethyl-7-carbaguanine + 2 NADP(+) = 7-cyano-7-deazaguanine + 2 NADPH + 3 H(+). Its pathway is tRNA modification; tRNA-queuosine biosynthesis. Functionally, catalyzes the NADPH-dependent reduction of 7-cyano-7-deazaguanine (preQ0) to 7-aminomethyl-7-deazaguanine (preQ1). In Nitrosomonas eutropha (strain DSM 101675 / C91 / Nm57), this protein is NADPH-dependent 7-cyano-7-deazaguanine reductase.